Reading from the N-terminus, the 115-residue chain is Transmembrane protein 218 (115 aa).

Transmembrane regions (helical) follow at residues 5–25 (VLGV…VLLL), 38–58 (FSIV…LLFP), and 81–101 (YVLL…LLTH).

Belongs to the TMEM218 family. In terms of assembly, interacts with TMEM67.

It localises to the membrane. It is found in the cell projection. Its subcellular location is the cilium. Functionally, may be involved in ciliary biogenesis or function. This is Transmembrane protein 218 (Tmem218) from Mus musculus (Mouse).